We begin with the raw amino-acid sequence, 281 residues long: NADPH-dependent 7-cyano-7-deazaguanine reductase (281 aa).

Substrate is bound at residue 87–89 (VES). 89–90 (SK) lines the NADPH pocket. Cys-188 acts as the Thioimide intermediate in catalysis. The active-site Proton donor is Asp-195. Substrate is bound at residue 227 to 228 (HE). 256-257 (RG) serves as a coordination point for NADPH.

It belongs to the GTP cyclohydrolase I family. QueF type 2 subfamily. Homodimer.

Its subcellular location is the cytoplasm. It catalyses the reaction 7-aminomethyl-7-carbaguanine + 2 NADP(+) = 7-cyano-7-deazaguanine + 2 NADPH + 3 H(+). The protein operates within tRNA modification; tRNA-queuosine biosynthesis. Functionally, catalyzes the NADPH-dependent reduction of 7-cyano-7-deazaguanine (preQ0) to 7-aminomethyl-7-deazaguanine (preQ1). This chain is NADPH-dependent 7-cyano-7-deazaguanine reductase, found in Aliivibrio fischeri (strain ATCC 700601 / ES114) (Vibrio fischeri).